Consider the following 122-residue polypeptide: HetP-like commitment protein Alr3234 (122 aa).

Belongs to the HetP family. As to quaternary structure, in bacterial two-hybrid assays interacts robustly with itself, Asl1930, Alr2902 and HetR and weakly with HetP.

Its function is as follows. Delays heterocyst differentiation and commitment when nitrogen is limiting. Interplay between the 4 HetP paralogs controls the timing of commitment to heterocyst formation and its duration. Epistatic analysis show that the 3 paralogs act upstream of hetP to delay commitment (asl1930, alr3234) or inhibit development (alr2902). Asl1930 and Alr3234 must also attenuate the activity of Alr2902. Ectopic expression does not complement a hetP deletion. The protein is HetP-like commitment protein Alr3234 of Nostoc sp. (strain PCC 7120 / SAG 25.82 / UTEX 2576).